Reading from the N-terminus, the 273-residue chain is Ribosomal RNA small subunit methyltransferase A (273 aa).

Residues Asn-18, Leu-20, Gly-45, Glu-66, Asp-91, and Asn-113 each contribute to the S-adenosyl-L-methionine site.

The protein belongs to the class I-like SAM-binding methyltransferase superfamily. rRNA adenine N(6)-methyltransferase family. RsmA subfamily.

The protein resides in the cytoplasm. It carries out the reaction adenosine(1518)/adenosine(1519) in 16S rRNA + 4 S-adenosyl-L-methionine = N(6)-dimethyladenosine(1518)/N(6)-dimethyladenosine(1519) in 16S rRNA + 4 S-adenosyl-L-homocysteine + 4 H(+). Specifically dimethylates two adjacent adenosines (A1518 and A1519) in the loop of a conserved hairpin near the 3'-end of 16S rRNA in the 30S particle. May play a critical role in biogenesis of 30S subunits. In Escherichia coli O81 (strain ED1a), this protein is Ribosomal RNA small subunit methyltransferase A.